Reading from the N-terminus, the 278-residue chain is Cytoplasmic envelopment protein 1 (278 aa).

It belongs to the herpesviridae cytoplasmic envelopment protein 1 family. Interacts with BSRF1 tegument protein; the BBRF2-BSRF1 complexes oligomerize and might play a role in tethering the viral nucleocapsids to the host Golgi membrane during secondary envelopment.

Its subcellular location is the virion. It localises to the virion tegument. The protein resides in the host cytoplasm. It is found in the host Golgi apparatus. Functionally, plays a critical role in cytoplasmic virus egress. Participates in the final step of tegumentation and envelope acquisition within the host cytoplasm. The protein is Cytoplasmic envelopment protein 1 of Homo sapiens (Human).